The chain runs to 718 residues: NF-kappa-B inhibitor zeta (718 aa).

The span at 1–17 shows a compositional bias: basic and acidic residues; sequence MIVDKLLDDSRGGEGLR. 2 disordered regions span residues 1 to 20 and 58 to 108; these read MIVDKLLDDSRGGEGLRDAA and SAPG…RQQR. The span at 58-83 shows a compositional bias: low complexity; that stretch reads SAPGSPGSDSSDFSSASSVSSCGAVE. Residues 84 to 97 are compositionally biased toward basic and acidic residues; the sequence is SRSRGGARAERQPV. Positions 108-130 constitute an OCA domain; the sequence is RGPFQGVRVKNSVKELLLHIRSH. The Nuclear localization signal motif lies at 164–179; sequence KRKGPDSLSDGPACKR. Residues 186-211 form a disordered region; the sequence is QFLTPPQTPTPGESMEDVHLNEPKQE. Over residues 201–211 the composition is skewed to basic and acidic residues; that stretch reads EDVHLNEPKQE. Residues 321–394 are required for transcriptional activity; sequence AYEPNLFDGP…MVGHEMASDS (74 aa). Positions 404 to 718 are interaction with NFKB1/p50; it reads MGNPMNTTQL…KSIQQRAPPY (315 aa). ANK repeat units lie at residues 443 to 472, 479 to 508, 512 to 541, 551 to 580, 582 to 607, 612 to 641, and 648 to 681; these read DGDTFLHIAVAQGRRALSYVLARKMNALHM, NGQSAFQVAVAANQHLIVQDLVNIGAQVNT, WGRTPLHVCAEKGHSQVLQAIQKGAVGSNQ, DGLTPLHCAVIAHNAVVHELQRNQQPHSPE, QELLLKNKSLVDTIKCLIQMGAAVEA, SGRTALHLAAEEANLELIRLFLELPSCLSF, and NGNTALHVAASLQYRLTQLDAVRLLMRKGADPST.

In terms of assembly, interacts with NFKB1/p50. Interacts with RELA. Interacts with AKIRIN2. As to expression, expressed at high levels in peripheral blood leukocytes and lung, at moderate levels in liver, placenta, and at low levels in spleen, kidney, skeletal muscle and heart.

It localises to the nucleus. Functionally, involved in regulation of NF-kappa-B transcription factor complexes. Inhibits NF-kappa-B activity without affecting its nuclear translocation upon stimulation. Inhibits DNA-binding of RELA and NFKB1/p50, and of the NF-kappa-B p65-p50 heterodimer and the NF-kappa-B p50-p50 homodimer. Also seems to activate NF-kappa-B-mediated transcription. In vitro, upon association with NFKB1/p50 has transcriptional activation activity and, together with NFKB1/p50 and RELA, is recruited to LCN2 promoters. Promotes transcription of LCN2 and DEFB4. Is recruited to IL-6 promoters and activates IL-6 but decreases TNF-alpha production in response to LPS. Seems to be involved in the induction of inflammatory genes activated through TLR/IL-1 receptor signaling. Involved in the induction of T helper 17 cells (Th17) differentiation upon recognition of antigen by T cell antigen receptor (TCR). The polypeptide is NF-kappa-B inhibitor zeta (NFKBIZ) (Homo sapiens (Human)).